The chain runs to 81 residues: Small ribosomal subunit protein bS16 (81 aa).

It belongs to the bacterial ribosomal protein bS16 family.

This is Small ribosomal subunit protein bS16 from Phytoplasma mali (strain AT).